The sequence spans 309 residues: tRNA dimethylallyltransferase (309 aa).

10–17 contributes to the ATP binding site; sequence GPTAVGKT. 12–17 is a substrate binding site; the sequence is TAVGKT. The interaction with substrate tRNA stretch occupies residues 35-38; sequence DSMQ.

Belongs to the IPP transferase family. Monomer. It depends on Mg(2+) as a cofactor.

It carries out the reaction adenosine(37) in tRNA + dimethylallyl diphosphate = N(6)-dimethylallyladenosine(37) in tRNA + diphosphate. In terms of biological role, catalyzes the transfer of a dimethylallyl group onto the adenine at position 37 in tRNAs that read codons beginning with uridine, leading to the formation of N6-(dimethylallyl)adenosine (i(6)A). This is tRNA dimethylallyltransferase from Clostridium botulinum (strain Alaska E43 / Type E3).